The following is a 562-amino-acid chain: Arginine--tRNA ligase (562 aa).

The 'HIGH' region signature appears at 121–131 (PNIAKPMGMGH).

The protein belongs to the class-I aminoacyl-tRNA synthetase family. Monomer.

Its subcellular location is the cytoplasm. The catalysed reaction is tRNA(Arg) + L-arginine + ATP = L-arginyl-tRNA(Arg) + AMP + diphosphate. The protein is Arginine--tRNA ligase of Limosilactobacillus fermentum (strain NBRC 3956 / LMG 18251) (Lactobacillus fermentum).